The chain runs to 235 residues: UPF0714 protein YmaC (235 aa).

The chain crosses the membrane as a helical span at residues 5–24 (LLNVILVLAIVLFLRYVHYS).

It belongs to the UPF0714 family.

The protein resides in the cell membrane. The chain is UPF0714 protein YmaC (ymaC) from Bacillus subtilis (strain 168).